A 381-amino-acid chain; its full sequence is Cobalt-precorrin-5B C(1)-methyltransferase (381 aa).

Belongs to the CbiD family.

The catalysed reaction is Co-precorrin-5B + S-adenosyl-L-methionine = Co-precorrin-6A + S-adenosyl-L-homocysteine. It participates in cofactor biosynthesis; adenosylcobalamin biosynthesis; cob(II)yrinate a,c-diamide from sirohydrochlorin (anaerobic route): step 6/10. Catalyzes the methylation of C-1 in cobalt-precorrin-5B to form cobalt-precorrin-6A. This is Cobalt-precorrin-5B C(1)-methyltransferase from Prochlorococcus marinus (strain SARG / CCMP1375 / SS120).